We begin with the raw amino-acid sequence, 141 residues long: Plasmatocyte-spreading peptide (141 aa).

The N-terminal stretch at 1–22 (MKLTINILFCLILISQYNSANG) is a signal peptide. The propeptide occupies 23–118 (NLRDLFNNVR…ATGGKDDKGR (96 aa)). The span at 46–58 (VKTLFHPSDKSGN) shows a compositional bias: basic and acidic residues. The disordered stretch occupies residues 46–118 (VKTLFHPSDK…ATGGKDDKGR (73 aa)). The span at 83–98 (PVAVTPAPVVSTTTQA) shows a compositional bias: low complexity. Residues 99-108 (SAPTVATNGT) are compositionally biased toward polar residues. Cysteines 125 and 137 form a disulfide.

The protein belongs to the GBP/PSP1/paralytic peptide family.

Mediates the spreading of plasmatocytes to foreign surfaces. Plasmocytes are a class of hemocytes involved in insect cellular immunity. In Chrysodeixis includens (Soybean looper), this protein is Plasmatocyte-spreading peptide (PSP1).